An 848-amino-acid chain; its full sequence is Adenylate cyclase (848 aa).

The interval 1 to 535 (MYLYIETLKQ…DVSHHFPLRL (535 aa)) is catalytic. Positions 541 to 848 (KALYSPCEIR…DTPLLQQYFS (308 aa)) are regulatory. Phosphohistidine; by CRR is present on His609.

Belongs to the adenylyl cyclase class-1 family.

It is found in the cytoplasm. The enzyme catalyses ATP = 3',5'-cyclic AMP + diphosphate. The regulatory domain is involved in the regulation of cyclase activity by the carbon source. Activated by the PTS system, glucose-specific IIA component (CRR). Catalyzes the formation of the second messenger cAMP from ATP. Its transcript is probably degraded by endoribonuclease LS (rnlA), decreasing cAMP levels and the negative regulator Crp-cAMP, which then induces its own transcription again. The chain is Adenylate cyclase (cyaA) from Escherichia coli (strain K12).